The chain runs to 113 residues: Hydrogenase maturation factor HypA (113 aa).

H2 serves as a coordination point for Ni(2+). The Zn(2+) site is built by C73, C76, C89, and C92.

Belongs to the HypA/HybF family.

In terms of biological role, involved in the maturation of [NiFe] hydrogenases. Required for nickel insertion into the metal center of the hydrogenase. This is Hydrogenase maturation factor HypA from Aeromonas salmonicida (strain A449).